A 479-amino-acid chain; its full sequence is Aspartyl/glutamyl-tRNA(Asn/Gln) amidotransferase subunit B (479 aa).

The protein belongs to the GatB/GatE family. GatB subfamily. In terms of assembly, heterotrimer of A, B and C subunits.

It carries out the reaction L-glutamyl-tRNA(Gln) + L-glutamine + ATP + H2O = L-glutaminyl-tRNA(Gln) + L-glutamate + ADP + phosphate + H(+). It catalyses the reaction L-aspartyl-tRNA(Asn) + L-glutamine + ATP + H2O = L-asparaginyl-tRNA(Asn) + L-glutamate + ADP + phosphate + 2 H(+). Allows the formation of correctly charged Asn-tRNA(Asn) or Gln-tRNA(Gln) through the transamidation of misacylated Asp-tRNA(Asn) or Glu-tRNA(Gln) in organisms which lack either or both of asparaginyl-tRNA or glutaminyl-tRNA synthetases. The reaction takes place in the presence of glutamine and ATP through an activated phospho-Asp-tRNA(Asn) or phospho-Glu-tRNA(Gln). The polypeptide is Aspartyl/glutamyl-tRNA(Asn/Gln) amidotransferase subunit B (Halorhodospira halophila (strain DSM 244 / SL1) (Ectothiorhodospira halophila (strain DSM 244 / SL1))).